A 199-amino-acid chain; its full sequence is MECVFGLVGNGFAIVAADTSAVHSILLHKNKEDKIMTLDSHKLVAASGEPGDRVQFTEYVQKNVSLYQFRNGIPLSTAAAANFTRGELATALRKNPYSVNILMAGYDKEAGASLYYIDYIATLHKVDKGAFGYGSYFSLSTMDRHYRSDMSVEEAIELVDKCILEIRSRLVIAPPNFVIKIVDKDGAREYGWRISTADA.

An N-acetylmethionine modification is found at Met1.

The protein belongs to the peptidase T1B family. In terms of assembly, component of the 20S core complex of the 26S proteasome. The 26S proteasome is composed of a core protease (CP), known as the 20S proteasome, capped at one or both ends by the 19S regulatory particle (RP/PA700). The 20S proteasome core is composed of 28 subunits that are arranged in four stacked rings, resulting in a barrel-shaped structure. The two end rings are each formed by seven alpha subunits, and the two central rings are each formed by seven beta subunits. The catalytic chamber with the active sites is on the inside of the barrel. Ubiquitous low levels, higher expression in siliques and flowers.

The protein localises to the cytoplasm. Its subcellular location is the nucleus. Its function is as follows. Non-catalytic component of the proteasome, a multicatalytic proteinase complex which is characterized by its ability to cleave peptides with Arg, Phe, Tyr, Leu, and Glu adjacent to the leaving group at neutral or slightly basic pH. The proteasome has an ATP-dependent proteolytic activity. The sequence is that of Proteasome subunit beta type-2-B (PBD2) from Arabidopsis thaliana (Mouse-ear cress).